A 331-amino-acid chain; its full sequence is Cytosolic arginine sensor for mTORC1 subunit 1 (331 aa).

A Phosphoserine modification is found at Ser14. 2 ACT domains span residues 72 to 137 and 259 to 320; these read AEAT…HTLA and GELW…DILQ. L-arginine-binding positions include 110 to 111, Gly273, 279 to 280, and 299 to 303; these read SV, IV, and TFNFD.

The protein belongs to the GATS family. In terms of assembly, forms homodimers and heterodimers with CASTOR2. Interacts with the GATOR2 complex which is composed of MIOS, SEC13, SEH1L, WDR24 and WDR59; the interaction is negatively regulated by arginine. Interacts with TM4SF5; the interaction is positively regulated by leucine and is negatively regulated by arginine. In terms of processing, phosphorylation at Ser-14 by AKT1, promoting the interaction between CASTOR1 and RNF167. Ubiquitinated by RNF167 via 'Lys-29'-polyubiquitination, leading to its degradation, releasing the GATOR2 complex. Ubiquitination by RNF167 is promoted by phosphorylation at Ser-14 by AKT1.

It is found in the cytoplasm. It localises to the cytosol. In terms of biological role, functions as an intracellular arginine sensor within the amino acid-sensing branch of the TORC1 signaling pathway. As a homodimer or a heterodimer with CASTOR2, binds and inhibits the GATOR subcomplex GATOR2 and thereby mTORC1. Binding of arginine to CASTOR1 allosterically disrupts the interaction of CASTOR1-containing dimers with GATOR2 which can in turn activate mTORC1 and the TORC1 signaling pathway. The polypeptide is Cytosolic arginine sensor for mTORC1 subunit 1 (Mus musculus (Mouse)).